The chain runs to 624 residues: Glycosyltransferase AglD (624 aa).

D201 is an active-site residue. 8 helical membrane passes run 260–280 (VTIVAGLLLTVLALALMTLYI), 285–305 (VISVLGDADPALVAAAAVIYV), 381–401 (LLTIAGLAGVVLVGLAATGGL), 427–447 (AAYVATGVGVVAILGVLGIAL), 496–518 (VGLTSLAIWTVDVVTAVVVLLAL), 532–552 (FFAVSVGNLAKVLPLSPGGVG), 556–576 (IAFTVFMAALAPVTPAAALAA), and 587–607 (VTIVGGVGSMLSLNVSLTTAV).

It belongs to the glycosyltransferase 2 family.

The protein resides in the cell membrane. It functions in the pathway cell surface structure biogenesis; S-layer biogenesis. Functionally, involved in the assembly of a N-linked pentasaccharide that decorates the S-layer glycoprotein and flagellins. Catalyzes the addition of the mannose found at position 5 of the pentasaccharide to its own distinct dolichol phosphate carrier. In Haloferax volcanii (strain ATCC 29605 / DSM 3757 / JCM 8879 / NBRC 14742 / NCIMB 2012 / VKM B-1768 / DS2) (Halobacterium volcanii), this protein is Glycosyltransferase AglD (aglD).